Consider the following 97-residue polypeptide: Large ribosomal subunit protein bL27 (97 aa).

The propeptide occupies 1 to 12 (MLKMNLANLQLF). The interval 14–38 (HKKGGGSTSNGRDSESKRLGAKAAD) is disordered.

This sequence belongs to the bacterial ribosomal protein bL27 family. In terms of processing, the N-terminus is cleaved by ribosomal processing cysteine protease Prp.

The chain is Large ribosomal subunit protein bL27 from Streptococcus mutans serotype c (strain ATCC 700610 / UA159).